The primary structure comprises 775 residues: Ubiquitin carboxyl-terminal hydrolase 14 (775 aa).

The UBP-type 1; degenerate zinc finger occupies 1 to 108 (MSCPHLTETN…EDLYDYFYVP (108 aa)). 20 residues coordinate Zn(2+): C25, C28, C41, C44, C49, H56, H60, H66, C153, H155, C174, C177, C186, C189, C194, H207, H211, H217, C236, and C239. The segment at 151-259 (TTCDHIINLP…THMLNFGIDI (109 aa)) adopts a UBP-type 2 zinc-finger fold. The region spanning 300–774 (TGLKNLGNSC…TGYVYLFERL (475 aa)) is the USP domain. The Nucleophile role is filled by C309. S456 carries the post-translational modification Phosphoserine. 2 consecutive UBA domains span residues 576 to 617 (EWNQ…LFEH) and 639 to 679 (SVSE…ILNH). H730 acts as the Proton acceptor in catalysis.

The protein belongs to the peptidase C19 family.

It carries out the reaction Thiol-dependent hydrolysis of ester, thioester, amide, peptide and isopeptide bonds formed by the C-terminal Gly of ubiquitin (a 76-residue protein attached to proteins as an intracellular targeting signal).. In Schizosaccharomyces pombe (strain 972 / ATCC 24843) (Fission yeast), this protein is Ubiquitin carboxyl-terminal hydrolase 14 (ubp14).